The following is a 202-amino-acid chain: Small ribosomal subunit protein uS4c (202 aa).

Residues 20–43 are disordered; that stretch reads GLTRKTTRRNSRPGQHGDQPRKPS. The region spanning 90–152 is the S4 RNA-binding domain; sequence MRLDNIVFRL…ARSKQLVENY (63 aa).

It belongs to the universal ribosomal protein uS4 family. As to quaternary structure, part of the 30S ribosomal subunit. Contacts protein S5. The interaction surface between S4 and S5 is involved in control of translational fidelity.

It localises to the plastid. It is found in the chloroplast. One of the primary rRNA binding proteins, it binds directly to 16S rRNA where it nucleates assembly of the body of the 30S subunit. Its function is as follows. With S5 and S12 plays an important role in translational accuracy. This is Small ribosomal subunit protein uS4c (rps4) from Rhodomonas salina (Cryptomonas salina).